The chain runs to 520 residues: MEFHNGGHVSGIGGFLVSLTSRMKPHTLAVTPALIFAITVATIGSFQFGYNTGVINAPETIIKEFINKTLTDKANAPPSEVLLTNLWSLSVAIFSVGGMIGSFSVGLFVNRFGRRNSMLIVNLLAATGGCLMGLCKIAESVEMLILGRLVIGLFCGLCTGFVPMYIGEISPTALRGAFGTLNQLGIVIGILVAQIFGLELILGSEELWPVLLGFTILPAILQSAALPCCPESPRFLLINRKKEENATRILQRLWGTQDVSQDIQEMKDESARMSQEKQVTVLELFRVSSYRQPIIISIVLQLSQQLSGINAVFYYSTGIFKDAGVQQPIYATISAGVVNTIFTLLSLFLVERAGRRTLHMIGLGGMAFCSTLMTVSLLLKNHYNGMSFVCIGAILVFVACFEIGPGPIPWFIVAELFSQGPRPAAMAVAGCSNWTSNFLVGLLFPSAAYYLGAYVFIIFTGFLITFLAFTFFKVPETRGRTFEDITRAFEGQAHGADRSGKDGVMGMNSIEPAKETTTNV.

Topologically, residues 1–29 (MEFHNGGHVSGIGGFLVSLTSRMKPHTLA) are cytoplasmic. The helical transmembrane segment at 30-50 (VTPALIFAITVATIGSFQFGY) threads the bilayer. Topologically, residues 51–88 (NTGVINAPETIIKEFINKTLTDKANAPPSEVLLTNLWS) are extracellular. The N-linked (GlcNAc...) asparagine glycan is linked to Asn67. The helical transmembrane segment at 89-109 (LSVAIFSVGGMIGSFSVGLFV) threads the bilayer. Residues 110–117 (NRFGRRNS) lie on the Cytoplasmic side of the membrane. Residues 118–138 (MLIVNLLAATGGCLMGLCKIA) traverse the membrane as a helical segment. Residues 139–148 (ESVEMLILGR) lie on the Extracellular side of the membrane. The chain crosses the membrane as a helical span at residues 149–169 (LVIGLFCGLCTGFVPMYIGEI). The Cytoplasmic portion of the chain corresponds to 170-177 (SPTALRGA). The helical transmembrane segment at 178–198 (FGTLNQLGIVIGILVAQIFGL) threads the bilayer. Position 183 (Gln183) interacts with D-glucose. Topologically, residues 199 to 207 (ELILGSEEL) are extracellular. The chain crosses the membrane as a helical span at residues 208–228 (WPVLLGFTILPAILQSAALPC). Residues 229 to 293 (CPESPRFLLI…LFRVSSYRQP (65 aa)) lie on the Cytoplasmic side of the membrane. A helical transmembrane segment spans residues 294-314 (IIISIVLQLSQQLSGINAVFY). D-glucose is bound by residues 304 to 305 (QQ) and Asn310. The Extracellular portion of the chain corresponds to 315-328 (YSTGIFKDAGVQQP). The helical transmembrane segment at 329–349 (IYATISAGVVNTIFTLLSLFL) threads the bilayer. D-glucose is bound at residue Asn339. At 350–358 (VERAGRRTL) the chain is on the cytoplasmic side. Residues 359 to 379 (HMIGLGGMAFCSTLMTVSLLL) traverse the membrane as a helical segment. Residues 380–392 (KNHYNGMSFVCIG) are Extracellular-facing. A helical membrane pass occupies residues 393 to 413 (AILVFVACFEIGPGPIPWFIV). 2 residues coordinate D-glucose: Glu402 and Trp410. The Cytoplasmic segment spans residues 414–423 (AELFSQGPRP). A helical membrane pass occupies residues 424-444 (AAMAVAGCSNWTSNFLVGLLF). The Extracellular segment spans residues 445-451 (PSAAYYL). Residues 452 to 472 (GAYVFIIFTGFLITFLAFTFF) traverse the membrane as a helical segment. Residues 473 to 520 (KVPETRGRTFEDITRAFEGQAHGADRSGKDGVMGMNSIEPAKETTTNV) are Cytoplasmic-facing. Positions 493-520 (AHGADRSGKDGVMGMNSIEPAKETTTNV) are disordered.

The protein belongs to the major facilitator superfamily. Sugar transporter (TC 2.A.1.1) family. Glucose transporter subfamily. In terms of tissue distribution, mainly expressed in testis. Also expressed in small intestine, liver and kidney.

The protein resides in the cell membrane. It catalyses the reaction D-glucose(out) = D-glucose(in). It carries out the reaction L-dehydroascorbate(out) = L-dehydroascorbate(in). Its function is as follows. Hexose transporter that can mediate the transport of glucose and dehydroascorbate across the cell membrane. In Homo sapiens (Human), this protein is Solute carrier family 2, facilitated glucose transporter member 14.